The chain runs to 233 residues: Large ribosomal subunit protein uL3 (233 aa).

The disordered stretch occupies residues 145 to 172; it reads FGSQRASHGNSRSHRVPGSIGQAQDPGR. Residue Gln168 is modified to N5-methylglutamine.

It belongs to the universal ribosomal protein uL3 family. Part of the 50S ribosomal subunit. Forms a cluster with proteins L14 and L19. Post-translationally, methylated by PrmB.

Its function is as follows. One of the primary rRNA binding proteins, it binds directly near the 3'-end of the 23S rRNA, where it nucleates assembly of the 50S subunit. The polypeptide is Large ribosomal subunit protein uL3 (Bordetella petrii (strain ATCC BAA-461 / DSM 12804 / CCUG 43448)).